We begin with the raw amino-acid sequence, 188 residues long: MASVSTNEFKGGLKFMLDNEPCAIIDNEYVKPGKGQAFNRVKLRKLLSGKVLEKTFKSGESFELADVVDVELGYLYNDGEFYHFMNNETFEQIAADVKAVADSAKWLVENDVCTLTLWNDNPITVTPPNFVEIEVTETDPGLKGDTQGTGGKPATLATGAVVRVPLFIAIGEVVKVDTRTGEYVGRVK.

Residue K34 is modified to N6-(3,6-diaminohexanoyl)-5-hydroxylysine.

It belongs to the elongation factor P family. In terms of processing, may be beta-lysylated on the epsilon-amino group of Lys-34 by the combined action of EpmA and EpmB, and then hydroxylated on the C5 position of the same residue by EpmC (if this protein is present). Lysylation is critical for the stimulatory effect of EF-P on peptide-bond formation. The lysylation moiety may extend toward the peptidyltransferase center and stabilize the terminal 3-CCA end of the tRNA. Hydroxylation of the C5 position on Lys-34 may allow additional potential stabilizing hydrogen-bond interactions with the P-tRNA.

It is found in the cytoplasm. The protein operates within protein biosynthesis; polypeptide chain elongation. Its function is as follows. Involved in peptide bond synthesis. Alleviates ribosome stalling that occurs when 3 or more consecutive Pro residues or the sequence PPG is present in a protein, possibly by augmenting the peptidyl transferase activity of the ribosome. Modification of Lys-34 is required for alleviation. The polypeptide is Elongation factor P (Vibrio atlanticus (strain LGP32) (Vibrio splendidus (strain Mel32))).